The following is a 156-amino-acid chain: Small ribosomal subunit protein uS7 (156 aa).

It belongs to the universal ribosomal protein uS7 family. Part of the 30S ribosomal subunit. Contacts proteins S9 and S11.

Its function is as follows. One of the primary rRNA binding proteins, it binds directly to 16S rRNA where it nucleates assembly of the head domain of the 30S subunit. Is located at the subunit interface close to the decoding center, probably blocks exit of the E-site tRNA. This Herminiimonas arsenicoxydans protein is Small ribosomal subunit protein uS7.